Reading from the N-terminus, the 110-residue chain is ORC1-type DNA replication protein 3 (110 aa).

8 to 12 serves as a coordination point for ATP; sequence SGKSL.

It belongs to the CDC6/cdc18 family.

Functionally, involved in regulation of DNA replication. The chain is ORC1-type DNA replication protein 3 (orc3) from Halobacterium salinarum (strain ATCC 700922 / JCM 11081 / NRC-1) (Halobacterium halobium).